Consider the following 8799-residue polypeptide: Nesprin-1 (8799 aa).

Residues 1-289 (MATSRASSRS…TQYPDIHGAG (289 aa)) form an actin-binding region. Topologically, residues 1–8748 (MATSRASSRS…GRAFLFRILR (8748 aa)) are cytoplasmic. Calponin-homology (CH) domains are found at residues 27 to 134 (IVQK…LYFQ) and 178 to 283 (GNAK…TQYP). Spectrin repeat units lie at residues 314–397 (RDDR…SRLF), 398–502 (DWHI…HLMK), 503–609 (MEFL…SMLE), 610–703 (EVIS…YARA), 704–815 (DEMD…QLTV), 816–923 (PLEE…KHVE), 924–1024 (ANSR…HLKI), 1025–1122 (AVEK…LVDD), 1123–1246 (PDKW…SSLE), 1247–1333 (GLIS…ERRI), 1334–1442 (QVSL…MEMV), 1443–1548 (KSKW…ILGH), 1549–1651 (LSQQ…LEDL), 1652–1761 (LARW…LQSV), 1762–1877 (LAEH…SHAC), 1878–1974 (MSTL…ADAL), 1975–2079 (VALK…QGQC), 2080–2193 (CGLI…LRVS), 2194–2301 (LSIW…KDFT), 2302–2399 (AQRT…QTQA), 2400–2511 (RIQD…LQDC), 2512–2617 (VSEL…LRSC), 2618–2729 (QLAL…LESV), 2730–2836 (IDQW…VEDL), 2837–2960 (VKDH…FGQV), 2961–3060 (TQLE…QNKE), 3061–3169 (QILQ…LENL), 3170–3273 (KIQM…VSRL), 3274–3385 (DRII…LEGA), 3386–3488 (LSKW…LEKL), 3489–3591 (VRLH…RMQL), 3592–3718 (NNVV…YSDW), 3719–3812 (YGST…LEKG), 3813–3918 (LHLA…LEAK), 3919–4026 (VKDH…QRVY), 4027–4137 (RSLE…KSLK), 4138–4233 (AELW…REQD), 4234–4337 (LQRT…IQVS), 4338–4449 (VTNL…LNKA), 4450–4558 (LSEK…LEKS), 4559–4667 (LVSR…TQEA), 4668–4774 (ILAR…LEDT), 4775–4880 (TSVY…CESR), 4881–4989 (MVQS…LTEI), 4990–5097 (YSRC…LQRC), 5098–5207 (MVQW…LEDA), 5208–5316 (VDEW…GKLV), 5317–5422 (KQEL…EEGK), 5423–5520 (AMSQ…LSKL), 5521–5628 (NQAL…LQDA), 5629–5745 (AKDM…PKEA), and 5746–5851 (VVQY…PSAH). Residues 314-8666 (RDDRLILKET…DLEKLLDMSS (8353 aa)) are a coiled coil. The residue at position 377 (Lys377) is a Phosphoserine. Ser732 is modified (phosphoserine). Positions 1288–1310 (KKRDLQEQMEQAQQGGQAGPGQE) are disordered. Thr2268 bears the Phosphothreonine mark. Ser5655 carries the phosphoserine modification. Residues 5868–5894 (PVTEESGEEGTNSEISSPPACRSPSPV) form a disordered region. Spectrin repeat units lie at residues 5971–6080 (LERQ…LEEK), 6081–6187 (LSDQ…SLGE), 6377–6488 (RQSI…RLQQ), 6489–6584 (ILRF…RSSL), 6585–6694 (HQNL…LEMW), 6695–6798 (SHLD…TILK), 6799–6905 (HWTR…QEKL), 6906–7023 (HQLQ…LEGL), 7024–7131 (LESW…LTSA), 7132–7240 (LGQW…SKAL), 7241–7353 (LQLW…LQAG), 7354–7457 (VVDY…LQSF), 7458–7561 (LLQH…RGII), 7562–7674 (DSQI…LAFL), 7675–7786 (LKDW…NEWA), 7787–7886 (VFSE…LKET), 7887–8000 (LVAV…IEET), 8001–8109 (WRLW…LKHF), and 8110–8221 (ISQR…VRLP). A phosphoserine mark is found at Asp8225 and Ser8227. The segment at 8237-8287 (TALSDLRWQDPSADGMPSPQPSSNPSLSLPQPLRSERSGRDTPASVDSIPL) is disordered. Over residues 8257 to 8269 (PSSNPSLSLPQPL) the composition is skewed to low complexity. Thr8278 is modified (phosphothreonine). Residues Ser8281, Ser8284, and Ser8308 each carry the phosphoserine modification. Spectrin repeat units follow at residues 8332-8440 (SSLE…MKQN), 8441-8550 (LQKW…LQDA), and 8551-8668 (LMQC…SSSQ). Thr8363 carries the phosphothreonine modification. Positions 8673 to 8735 (SWSSADELDT…SDSSRSDPRP (63 aa)) are disordered. Polar residues-rich tracts occupy residues 8682-8698 (TSGSVSPTSGRSTPNRQ) and 8706-8718 (SLSQPGPSVSSPK). Positions 8721 to 8735 (STRDGSDSSRSDPRP) are enriched in basic and acidic residues. One can recognise a KASH domain in the interval 8740-8799 (RAFLFRILRAALPFQLLLLLLIGLTCLVPMSEKDYSCALSNNFARSFHPMLRYTNGPPPL). Residues 8749–8769 (AALPFQLLLLLLIGLTCLVPM) traverse the membrane as a helical; Anchor for type IV membrane protein segment. Topologically, residues 8770 to 8799 (SEKDYSCALSNNFARSFHPMLRYTNGPPPL) are perinuclear space.

This sequence belongs to the nesprin family. Core component of LINC complexes which are composed of inner nuclear membrane SUN domain-containing proteins coupled to outer nuclear membrane KASH domain-containing nesprins. SUN and KASH domain-containing proteins seem to bind each other promiscuously; however, differentially expression of LINC complex constituents can give rise to specific assemblies. At least SUN1/2-containing core LINC complexes are proposed to be hexameric composed of three protomers of each KASH and SUN domain-containing protein. The SUN2:SYNE1/KASH1 LINC complex is a heterohexamer; the homotrimeric cloverleave-like conformation of the SUN domain is a prerequisite for LINC complex formation in which three separate SYNE1/KASH1 peptides bind at the interface of adjacent SUN domains. Self-associates. Interacts with SYNE3. Interacts with SUN3; proposed to form a spermatogenesis-specific LINC complex with SUN3 during sperm head formation. May interact with MUSK. Interacts with SPAG4/SUN4. Interacts with EMD and LMNA in vitro. Interacts with F-actin via its N-terminal domain. Interacts with DCTN1 and DYNC1I1/2; suggesting the association with the dynein-dynactin motor complex. Interacts (via KASH domain) with TMEM258. The disulfid bond with SUN1 or SUN2 is required for stability of the respective LINC complex under tensile forces. Expressed in C2F3 and CH310T1/2 cells, brain and skeletal muscle (at protein level).

It is found in the nucleus outer membrane. It localises to the nucleus. The protein resides in the nucleus envelope. Its subcellular location is the cytoplasm. The protein localises to the cytoskeleton. It is found in the myofibril. It localises to the sarcomere. Multi-isomeric modular protein which forms a linking network between organelles and the actin cytoskeleton to maintain the subcellular spatial organization. As a component of the LINC (LInker of Nucleoskeleton and Cytoskeleton) complex involved in the connection between the nuclear lamina and the cytoskeleton. The nucleocytoplasmic interactions established by the LINC complex play an important role in the transmission of mechanical forces across the nuclear envelope and in nuclear movement and positioning. May be involved in nucleus-centrosome attachment. During interkinetic nuclear migration (INM) at G2 phase and nuclear migration in neural progenitors its LINC complex association with SUN1/2 and probably association with cytoplasmic dynein-dynactin motor complexes functions to pull the nucleus toward the centrosome; SYNE1 and SYNE2 seem to act redundantly in cerebellum, midbrain, brain stem, and other brain regions except cerebral cortex and hippocampus. Required for centrosome migration to the apical cell surface during early ciliogenesis. May be involved in nuclear remodeling during sperm head formation in spermatogenesis; a probable SUN3:SYNE1/KASH1 LINC complex may tether spermatid nuclei to posterior cytoskeletal structures such as the manchette. This Mus musculus (Mouse) protein is Nesprin-1.